Here is a 77-residue protein sequence, read N- to C-terminus: Immune protein Tsi2 (77 aa).

In terms of assembly, forms a heterotetramer with Tse2 consisting of two Tse2 dimers and two Tsi2 dimers. Formation of the complex inactivates Tse2 enzymatic activity.

Functionally, immunity protein that plays a role in preventing early activation of toxin Tse2. Binds to a large surface of Tse2 and thereby occludes the active site to specifically inhibits Tse2. The sequence is that of Immune protein Tsi2 from Pseudomonas aeruginosa (strain ATCC 15692 / DSM 22644 / CIP 104116 / JCM 14847 / LMG 12228 / 1C / PRS 101 / PAO1).